Here is a 365-residue protein sequence, read N- to C-terminus: uncharacterized protein (365 aa).

A run of 6 helical transmembrane segments spans residues 3–23, 60–80, 100–120, 141–161, 171–191, and 280–300; these read MDTSKVILIVAIIIWIILYSI, IGIISIPICVILGFFMLLNII, VFLFGDVIPWIPGIIALLIAI, SGILLLLGLPLGAFVELGDEF, AIASAGPLANLIIFLTSIPLL, and TALFINTIYWTYWFNFLLALF.

This sequence to S.solfataricus C04034.

Its subcellular location is the cell membrane. This is an uncharacterized protein from Methanocaldococcus jannaschii (strain ATCC 43067 / DSM 2661 / JAL-1 / JCM 10045 / NBRC 100440) (Methanococcus jannaschii).